The chain runs to 324 residues: Acetyl-coenzyme A carboxylase carboxyl transferase subunit alpha (324 aa).

In terms of domain architecture, CoA carboxyltransferase C-terminal spans 37-291 (KLDKRLDRLK…QEYVLQEWLK (255 aa)).

This sequence belongs to the AccA family. As to quaternary structure, acetyl-CoA carboxylase is a heterohexamer composed of biotin carboxyl carrier protein (AccB), biotin carboxylase (AccC) and two subunits each of ACCase subunit alpha (AccA) and ACCase subunit beta (AccD).

Its subcellular location is the cytoplasm. The enzyme catalyses N(6)-carboxybiotinyl-L-lysyl-[protein] + acetyl-CoA = N(6)-biotinyl-L-lysyl-[protein] + malonyl-CoA. Its pathway is lipid metabolism; malonyl-CoA biosynthesis; malonyl-CoA from acetyl-CoA: step 1/1. Component of the acetyl coenzyme A carboxylase (ACC) complex. First, biotin carboxylase catalyzes the carboxylation of biotin on its carrier protein (BCCP) and then the CO(2) group is transferred by the carboxyltransferase to acetyl-CoA to form malonyl-CoA. This is Acetyl-coenzyme A carboxylase carboxyl transferase subunit alpha from Chlamydia trachomatis serovar D (strain ATCC VR-885 / DSM 19411 / UW-3/Cx).